Consider the following 513-residue polypeptide: Probable WRKY transcription factor 3 (513 aa).

Positions 1–11 (MAEKEEKEPSK) are enriched in basic and acidic residues. Disordered stretches follow at residues 1 to 26 (MAEK…ISLP), 175 to 281 (NVHM…PACP), and 297 to 394 (IIYK…VASS). A compositionally biased stretch (low complexity) spans 179–201 (QQSQQSEYPSSTQQQQQQQQQAS). Residues 202–228 (LTEIPSFSSAPRSQIRASVQETSQGQR) show a composition bias toward polar residues. A compositionally biased stretch (basic and acidic residues) spans 229–240 (ETSEISVFEHRS). The WRKY 1 DNA-binding region spans 244 to 308 (NADKPADDGY…YKGQHNHELP (65 aa)). Composition is skewed to polar residues over residues 311 to 335 (RGNN…SSLN) and 343 to 355 (TSQV…MSEA). The segment covering 368-387 (VGERHEDEPDPKRRNTEVRV) has biased composition (basic and acidic residues). A DNA-binding region (WRKY 2) is located at residues 409–474 (SEVDLLDDGY…YEGKHNHDVP (66 aa)).

In terms of tissue distribution, in young, mature and senescent leaves.

It is found in the nucleus. Its function is as follows. Transcription factor. Interacts specifically with the W box (5'-(T)TGAC[CT]-3'), a frequently occurring elicitor-responsive cis-acting element. The chain is Probable WRKY transcription factor 3 (WRKY3) from Arabidopsis thaliana (Mouse-ear cress).